The chain runs to 82 residues: Mitotic-spindle organizing protein 1 (82 aa).

Position 2 is an N-acetylalanine (alanine 2).

It belongs to the MOZART1 family. Associates with the gamma-tubulin ring complex (gTuRC) consisting of TUBGCP2, TUBGCP3, TUBGCP4, TUBGCP5 and TUBGCP6 and gamma-tubulin TUBG1 or TUBG2; within the complex, interacts with TUBGCP3 and TUBGCP6 to form a luminal bridge with actin that stabilizes the initial structure during complex assembly. Interacts with TUBG1.

The protein resides in the cytoplasm. It localises to the cytoskeleton. Its subcellular location is the microtubule organizing center. The protein localises to the centrosome. It is found in the spindle. Functionally, required for the recruitment and the assembly of the gamma-tubulin ring complex (gTuRC) at the centrosome. The gTuRC regulates the minus-end nucleation of alpha-beta tubulin heterodimers that grow into microtubule protafilaments, a critical step in centrosome duplication and spindle formation. The protein is Mitotic-spindle organizing protein 1 (MZT1) of Homo sapiens (Human).